The sequence spans 330 residues: DNA-directed RNA polymerase subunit alpha (330 aa).

Residues 1-225 (MSDLAIPTIS…KQFAALVSHN (225 aa)) are alpha N-terminal domain (alpha-NTD). The segment at 237-330 (VKYAIPEEKY…KKKNKGMDEA (94 aa)) is alpha C-terminal domain (alpha-CTD).

It belongs to the RNA polymerase alpha chain family. Homodimer. The RNAP catalytic core consists of 2 alpha, 1 beta, 1 beta' and 1 omega subunit. When a sigma factor is associated with the core the holoenzyme is formed, which can initiate transcription.

The catalysed reaction is RNA(n) + a ribonucleoside 5'-triphosphate = RNA(n+1) + diphosphate. Its function is as follows. DNA-dependent RNA polymerase catalyzes the transcription of DNA into RNA using the four ribonucleoside triphosphates as substrates. The polypeptide is DNA-directed RNA polymerase subunit alpha (Dehalococcoides mccartyi (strain ATCC BAA-2266 / KCTC 15142 / 195) (Dehalococcoides ethenogenes (strain 195))).